Reading from the N-terminus, the 105-residue chain is Vacuolar ATPase assembly integral membrane protein VMA21 homolog (105 aa).

Positions 1–26 are disordered; sequence MSTKNKKAAGGNGGAPKQTRQQSHDS. Residues 1 to 36 lie on the Cytoplasmic side of the membrane; the sequence is MSTKNKKAAGGNGGAPKQTRQQSHDSQDYSSFKTVL. A helical transmembrane segment spans residues 37-57; sequence FYCMLIVFLPVLTFFVLKGFV. Residues 58–68 lie on the Lumenal side of the membrane; that stretch reads LDQFLDISEVK. The helical transmembrane segment at 69-89 threads the bilayer; that stretch reads VNIASAVGAVVALHIALGLYI. Residues 90–105 lie on the Cytoplasmic side of the membrane; that stretch reads YRAYFGAPGSKGSKTD.

This sequence belongs to the VMA21 family.

It is found in the endoplasmic reticulum membrane. Its subcellular location is the endoplasmic reticulum-Golgi intermediate compartment membrane. The protein localises to the cytoplasmic vesicle. The protein resides in the COPII-coated vesicle membrane. Required for the assembly of the V0 complex of the vacuolar ATPase (V-ATPase) in the endoplasmic reticulum. The polypeptide is Vacuolar ATPase assembly integral membrane protein VMA21 homolog (Drosophila simulans (Fruit fly)).